A 366-amino-acid polypeptide reads, in one-letter code: Galactoside alpha-(1,2)-fucosyltransferase 1 (366 aa).

The Cytoplasmic segment spans residues 1–8 (MWPLSHRH). A helical; Signal-anchor for type II membrane protein transmembrane segment spans residues 9 to 25 (LCLAFLLVCVLSAISFF). The Lumenal segment spans residues 26–366 (LHIHQDSFRH…LSPLWTLAEP (341 aa)). Residues Asn-66, Asn-302, and Asn-328 are each glycosylated (N-linked (GlcNAc...) asparagine).

Belongs to the glycosyltransferase 11 family.

It is found in the golgi apparatus. The protein resides in the golgi stack membrane. It carries out the reaction a beta-D-galactosyl-(1-&gt;4)-N-acetyl-beta-D-glucosaminyl derivative + GDP-beta-L-fucose = an alpha-L-Fuc-(1-&gt;2)-beta-D-Gal-(1-&gt;4)-beta-D-GlcNAc derivative + GDP + H(+). It catalyses the reaction a ganglioside GA1 + GDP-beta-L-fucose = a ganglioside Fuc-GA1 + GDP + H(+). The enzyme catalyses a beta-D-Gal-(1-&gt;3)-beta-D-GlcNAc-(1-&gt;3)-beta-D-Gal-(1-&gt;4)-beta-D-Glc-(1&lt;-&gt;1')-Cer(d18:1(4E)) + GDP-beta-L-fucose = alpha-L-fucosyl-(1-&gt;2)- beta-D-galactosyl-(1-&gt;3)-N-acetyl-beta-D-glucosaminyl-(1-&gt;3)-beta-D-galactosyl-(1-&gt;4)-beta-D-glucosyl-(1&lt;-&gt;1')-N-acylsphing-4-enine + GDP + H(+). The catalysed reaction is a neolactoside nLc4Cer(d18:1(4E)) + GDP-beta-L-fucose = a neolactoside IV(2)-alpha-Fuc-nLc4Cer(d18:1(4E)) + GDP + H(+). It carries out the reaction a ganglioside GM1 + GDP-beta-L-fucose = a ganglioside Fuc-GM1 + GDP + H(+). It catalyses the reaction beta-D-galactosyl-(1-&gt;3)-N-acetyl-D-galactosamine + GDP-beta-L-fucose = alpha-L-fucosyl-(1-&gt;2)-beta-D-galactosyl-(1-&gt;3)-N-acetyl-D-galactosamine + GDP + H(+). It functions in the pathway protein modification; protein glycosylation. Functionally, catalyzes the transfer of L-fucose, from a guanosine diphosphate-beta-L-fucose, to the terminal galactose residue of glycoconjugates through an alpha(1,2) linkage leading to H antigen synthesis that is an intermediate substrate in the synthesis of ABO blood group antigens. H antigen is essential for maturation of the glomerular layer of the main olfactory bulb, in cell migration and early cell-cell contacts during tumor associated angiogenesis. Preferentially fucosylates soluble lactose and to a lesser extent fucosylates glycolipids gangliosides GA1 and GM1a. The sequence is that of Galactoside alpha-(1,2)-fucosyltransferase 1 from Ateles belzebuth (White-bellied spider monkey).